Consider the following 340-residue polypeptide: Lipopolysaccharide heptosyltransferase 3 (340 aa).

It belongs to the glycosyltransferase 9 family.

The enzyme catalyses an L-alpha-D-Hep-(1-&gt;3)-4-O-phospho-L-alpha-D-Hep-(1-&gt;5)-[alpha-Kdo-(2-&gt;4)]-alpha-Kdo-(2-&gt;6)-lipid A + ADP-L-glycero-beta-D-manno-heptose = an L-alpha-D-Hep-(1-&gt;7)-L-alpha-D-Hep-(1-&gt;3)-4-O-phospho-L-alpha-D-Hep-(1-&gt;5)-[alpha-Kdo-(2-&gt;4)]-alpha-Kdo-(2-&gt;6)-lipid A + ADP + H(+). It catalyses the reaction L-alpha-D-Hep-(1-&gt;3)-4-O-phospho-L-alpha-D-Hep-(1-&gt;5)-[alpha-Kdo-(2-&gt;4)]-alpha-Kdo-(2-&gt;6)-lipid A (E. coli) + ADP-L-glycero-beta-D-manno-heptose = L-alpha-D-Hep-(1-&gt;7)-L-alpha-D-Hep-(1-&gt;3)-4-O-phospho-L-alpha-D-Hep-(1-&gt;5)-[alpha-Kdo-(2-&gt;4)]-alpha-Kdo-(2-&gt;6)-lipid A (E. coli) + ADP + H(+). It participates in bacterial outer membrane biogenesis; LPS core biosynthesis. Functionally, glycosyltransferase involved in the biosynthesis of the core oligosaccharide region of lipopolysaccharide (LPS). Catalyzes the addition of the third heptose unit (HepIII) to the second heptose unit (HepII) of the phospho-Hep2-Kdo2-lipid A module. The transfer of HepIII seems to be a prerequisite to the phosphorylation of the second heptose unit. This is Lipopolysaccharide heptosyltransferase 3 from Escherichia coli.